A 215-amino-acid chain; its full sequence is Probable transaldolase (215 aa).

Lys-83 serves as the catalytic Schiff-base intermediate with substrate.

This sequence belongs to the transaldolase family. Type 3B subfamily.

The protein localises to the cytoplasm. It catalyses the reaction D-sedoheptulose 7-phosphate + D-glyceraldehyde 3-phosphate = D-erythrose 4-phosphate + beta-D-fructose 6-phosphate. It functions in the pathway carbohydrate degradation; pentose phosphate pathway; D-glyceraldehyde 3-phosphate and beta-D-fructose 6-phosphate from D-ribose 5-phosphate and D-xylulose 5-phosphate (non-oxidative stage): step 2/3. In terms of biological role, transaldolase is important for the balance of metabolites in the pentose-phosphate pathway. This is Probable transaldolase from Desulforudis audaxviator (strain MP104C).